The following is a 374-amino-acid chain: Patatin-2-Kuras 4 (374 aa).

The signal sequence occupies residues 1-11 (MILATTSSTCA). In terms of domain architecture, PNPLA spans 20-217 (LSIDGGGIKG…TVGDPALLSL (198 aa)). A GXGXXG motif is present at residues 24–29 (GGGIKG). Positions 63–67 (GTSTG) match the GXSXG motif. Catalysis depends on S65, which acts as the Nucleophile. A glycan (N-linked (GlcNAc...) asparagine) is linked at N103. The Proton acceptor role is filled by D203. The DGA/G motif lies at 203-205 (DGG). The stretch at 309 to 372 (ENALTGTTTE…DRKKLRANKA (64 aa)) forms a coiled coil.

It belongs to the patatin family.

The protein localises to the vacuole. Its function is as follows. Probable lipolytic acyl hydrolase (LAH), an activity which is thought to be involved in the response of tubers to pathogens. This chain is Patatin-2-Kuras 4 (pat2-k4), found in Solanum tuberosum (Potato).